A 31-amino-acid chain; its full sequence is Cytochrome b6-f complex subunit 6 (31 aa).

The chain crosses the membrane as a helical span at residues 4–24; sequence ITSYFGFLLAALTITSALFIG.

The protein belongs to the PetL family. As to quaternary structure, the 4 large subunits of the cytochrome b6-f complex are cytochrome b6, subunit IV (17 kDa polypeptide, PetD), cytochrome f and the Rieske protein, while the 4 small subunits are PetG, PetL, PetM and PetN. The complex functions as a dimer.

Its subcellular location is the plastid. It localises to the chloroplast thylakoid membrane. Component of the cytochrome b6-f complex, which mediates electron transfer between photosystem II (PSII) and photosystem I (PSI), cyclic electron flow around PSI, and state transitions. PetL is important for photoautotrophic growth as well as for electron transfer efficiency and stability of the cytochrome b6-f complex. This is Cytochrome b6-f complex subunit 6 from Coffea arabica (Arabian coffee).